The sequence spans 1501 residues: EF-hand calcium-binding domain-containing protein 6 (1501 aa).

The segment at 18-47 (RKFTHSRPHSSPCRVYSRNGSPNKFRSSST) is disordered. The span at 35 to 47 (RNGSPNKFRSSST) shows a compositional bias: polar residues. EF-hand domains lie at 70-105 (DRGD…FLMP), 172-207 (KNIK…FCMK), 297-332 (KSYE…FVYQ), 403-438 (DHSA…MAVK), 439-474 (LSDS…NCRM), 504-539 (RNLQ…FCPF), and 634-669 (QQDP…TGMP). The interval 699 to 718 (EDPPMRGPETTPPQPPTPSK) is disordered. 7 EF-hand domains span residues 741–776 (ESFR…LLLN), 847–882 (NRWS…FDIP), 883–918 (LTPR…NYSP), 964–999 (DRHQ…CGCS), 1069–1104 (SSQL…FCYK), 1176–1211 (SHYH…RVQI), and 1212–1247 (LTDE…ETAA). Asp-754, Asp-756, Asp-758, and Asp-765 together coordinate Ca(2+). Thr-884 bears the Phosphothreonine mark. Positions 1246–1307 (AATPMATGDS…TTVIPGTPPL (62 aa)) are disordered. Composition is skewed to polar residues over residues 1270 to 1279 (GTRSALSLPT) and 1286 to 1301 (SKSQ…TTVI). A Phosphoserine modification is found at Ser-1290. Phosphothreonine occurs at positions 1294 and 1304. An interaction with PARK7 region spans residues 1303-1501 (GTPPLQNCDP…YNDFLRAFLQ (199 aa)). 3 consecutive EF-hand domains span residues 1359 to 1394 (ISKE…LLKA), 1434 to 1469 (HCWR…YSIN), and 1470 to 1501 (LSEE…AFLQ). The tract at residues 1407–1501 (NAHKMKEAGA…YNDFLRAFLQ (95 aa)) is interaction with AR.

As to quaternary structure, microtubule inner protein component of sperm flagellar doublet microtubules. Binds PARK7. Part of a ternary complex containing PARK7, EFCAB6/DJBP and AR. In terms of tissue distribution, specifically expressed in the testis.

It is found in the nucleus. The protein localises to the cytoplasm. The protein resides in the cytoskeleton. It localises to the flagellum axoneme. Functionally, negatively regulates the androgen receptor by recruiting histone deacetylase complex, and protein DJ-1 antagonizes this inhibition by abrogation of this complex. Microtubule inner protein (MIP) part of the dynein-decorated doublet microtubules (DMTs) in cilia axoneme, which is required for motile cilia beating. This Homo sapiens (Human) protein is EF-hand calcium-binding domain-containing protein 6.